The sequence spans 345 residues: Tropomodulin-4 (345 aa).

Disordered regions lie at residues 40–64 and 326–345; these read PENM…GPLD and ARAA…QKKR. Residues 336–345 are compositionally biased toward basic and acidic residues; sequence NELRRQQKKR.

Belongs to the tropomodulin family. As to quaternary structure, binds to the N-terminus of tropomyosin and to actin.

The protein localises to the cytoplasm. It is found in the cytoskeleton. Functionally, blocks the elongation and depolymerization of the actin filaments at the pointed end. The Tmod/TM complex contributes to the formation of the short actin protofilament, which in turn defines the geometry of the membrane skeleton. This is Tropomodulin-4 (Tmod4) from Mus musculus (Mouse).